We begin with the raw amino-acid sequence, 140 residues long: Fluoride-specific ion channel FluC 1 (140 aa).

Helical transmembrane passes span 3 to 23, 38 to 58, 80 to 100, and 113 to 133; these read TGAT…GAAA, APLW…GLVL, ILYP…STVM, and IAGV…ALWC. Positions 91 and 94 each coordinate Na(+).

Belongs to the fluoride channel Fluc/FEX (TC 1.A.43) family.

It localises to the cell membrane. The catalysed reaction is fluoride(in) = fluoride(out). Its activity is regulated as follows. Na(+) is not transported, but it plays an essential structural role and its presence is essential for fluoride channel function. Functionally, fluoride-specific ion channel. Important for reducing fluoride concentration in the cell, thus reducing its toxicity. This is Fluoride-specific ion channel FluC 1 from Corynebacterium jeikeium (strain K411).